We begin with the raw amino-acid sequence, 178 residues long: Large ribosomal subunit protein uL10 (178 aa).

Belongs to the universal ribosomal protein uL10 family. In terms of assembly, part of the ribosomal stalk of the 50S ribosomal subunit. The N-terminus interacts with L11 and the large rRNA to form the base of the stalk. The C-terminus forms an elongated spine to which L12 dimers bind in a sequential fashion forming a multimeric L10(L12)X complex.

In terms of biological role, forms part of the ribosomal stalk, playing a central role in the interaction of the ribosome with GTP-bound translation factors. The sequence is that of Large ribosomal subunit protein uL10 from Leuconostoc mesenteroides subsp. mesenteroides (strain ATCC 8293 / DSM 20343 / BCRC 11652 / CCM 1803 / JCM 6124 / NCDO 523 / NBRC 100496 / NCIMB 8023 / NCTC 12954 / NRRL B-1118 / 37Y).